The sequence spans 1020 residues: MKGKNVQLLFALVVIILLFPTGASASPHAVSVGKGSYATEFPEIDFGGINDPGFRDQQGEPPATIYRSDRVTGPMQTNSWWGSLAVDRFSMNQYPHPFSVRHRAEGLHVFYDAPHNMVVHENREAGTWHIHGAIGTDFTIKHSGTANFEQAVVDDYNDWYVRGLLENGAHQMAITYGVGSPYIFVEYEDGSAVLDFDIAPDVWEMNGHVIGFSTHDHKHYAAFAPPGQNWSGIGSKTLTNNADYIAIAKLPEKDGNMLAKFEQYAYSVVRDAVADWTYDEATGTVTTTFEVTTEAKVQGAPDGTIFALYPHQYRHLASSSENQLLQNYQYEIIRGTMIGLEGKRFTTELTYPGVLPSLPDLGDYDRERLIGYLHDATSDYPTGSDTYELGKYIGKLATLAPIADQMGEYELAEQFRGELKDILEDWLQATNASGQLKGKNLFYYNENWGTILGYHAAHSSATRINDHHFHYGYFVKAAAEIARADQEWAKSENWGGMIDLLIRDFMADRDDDLFPYLRMFDPYSGNSWADGLATFDAGNNQESSSEAMHAWTNVILWAEATGNKALRDRAIYLYTTEMSAINEYFFDVHQEIFPEEYGPEIVTINWGGKMDHATWWNSGKVEKYAINWLPFHGGSLYLGHHPDYVDRAYEELRRDIGSTDWNLWSNLVWMYRAFTNPDDALQQMEASIDDYGLFDPGNEKIIERGSTKAQTYHWIHNLAELGRVDPTVTANHPIYAVFNKNGNRTYIVYNFSDSPITVQFSDGHSIQVEPHSFNIGNGDGPTNPDPSEPDLKNPYERIQAEAYDAMSGIQTEGTDDDGGGDNIGWINDGDWVKYERVHFERDASSIEVRVASDTPGGRIEIRTGSPTGTLLGDVQVPNTGGWQQWQTVTGNVQIQPGTYDVYLVFKGSPEYDLMNVNWFVFRANGQGNGDSHTHPDYTAGIRGITGNEVTIFFAPTTEARYVDVHLKVNNGQQLNYRMTERNGEWERVVENLSSGDVLEYSFTYEKLGPQYTTEWFTYSR.

Positions 1–25 (MKGKNVQLLFALVVIILLFPTGASA) are cleaved as a signal peptide. The interval 28–251 (HAVSVGKGSY…ADYIAIAKLP (224 aa)) is beta-sandwich subdomain. The GH81 domain occupies 28 to 722 (HAVSVGKGSY…HWIHNLAELG (695 aa)). Positions 252–350 (EKDGNMLAKF…EGKRFTTELT (99 aa)) are alpha/beta subdomain. The interval 360-722 (DLGDYDRERL…HWIHNLAELG (363 aa)) is (alpha/beta)6 barrel subdomain. The (1,3-beta-D-glucosyl)n site is built by Tyr-387, Lys-391, His-458, Asp-466, His-470, Asp-530, Asn-540, Glu-542, Glu-546, Glu-699, and Arg-704. The active site involves Asp-466. Active-site residues include Glu-542 and Glu-546. The tract at residues 771–790 (HSFNIGNGDGPTNPDPSEPD) is disordered. Residues 796–922 (ERIQAEAYDA…LMNVNWFVFR (127 aa)) enclose the CBM6 domain. Positions 812, 825, 853, 878, 912, and 915 each coordinate (1,3-beta-D-glucosyl)n. Positions 928–1020 (NGDSHTHPDY…YTTEWFTYSR (93 aa)) constitute a CBM56 domain.

The protein belongs to the glycosyl hydrolase 81 family.

Its subcellular location is the secreted. The enzyme catalyses Hydrolysis of (1-&gt;3)-beta-D-glucosidic linkages in (1-&gt;3)-beta-D-glucans.. Cleaves internal linkages in 1,3-beta-glucan. May contribute to plant biomass degradation. This chain is Glucan endo-1,3-beta-D-glucosidase, found in Halalkalibacterium halodurans (strain ATCC BAA-125 / DSM 18197 / FERM 7344 / JCM 9153 / C-125) (Bacillus halodurans).